The following is a 258-amino-acid chain: 5-oxoprolinase subunit A (258 aa).

The protein belongs to the LamB/PxpA family. As to quaternary structure, forms a complex composed of PxpA, PxpB and PxpC.

It catalyses the reaction 5-oxo-L-proline + ATP + 2 H2O = L-glutamate + ADP + phosphate + H(+). In terms of biological role, catalyzes the cleavage of 5-oxoproline to form L-glutamate coupled to the hydrolysis of ATP to ADP and inorganic phosphate. The sequence is that of 5-oxoprolinase subunit A from Corynebacterium jeikeium (strain K411).